The chain runs to 356 residues: tRNA pseudouridine synthase D (356 aa).

Catalysis depends on aspartate 84, which acts as the Nucleophile. In terms of domain architecture, TRUD spans 159–302; it reads GVPNYYGPQR…RRGARRPIRV (144 aa).

The protein belongs to the pseudouridine synthase TruD family.

The enzyme catalyses uridine(13) in tRNA = pseudouridine(13) in tRNA. Functionally, responsible for synthesis of pseudouridine from uracil-13 in transfer RNAs. The chain is tRNA pseudouridine synthase D from Thermus thermophilus (strain ATCC 27634 / DSM 579 / HB8).